The sequence spans 330 residues: Inactive hydroxysteroid dehydrogenase-like protein 1 (330 aa).

A2 carries the N-acetylalanine modification. The segment at 2–82 is required for mitochondria translocation; the sequence is AAVDSFYLLY…SGATDGIGRA (81 aa). NADP(+)-binding positions include 74–80, D125, and K222; that span reads GATDGIG.

This sequence belongs to the short-chain dehydrogenases/reductases (SDR) family. 17-beta-HSD 3 subfamily. In terms of assembly, interacts with STYXL1.

The protein resides in the mitochondrion. In Pongo abelii (Sumatran orangutan), this protein is Inactive hydroxysteroid dehydrogenase-like protein 1 (HSDL1).